Consider the following 169-residue polypeptide: Putative phosphoesterase SAR0985 (169 aa).

The Proton donor role is filled by His-34. 2 short sequence motifs (HXTX) span residues 34–37 (HVTI) and 115–118 (HFTI). His-115 functions as the Proton acceptor in the catalytic mechanism.

This sequence belongs to the 2H phosphoesterase superfamily. YjcG family.

This is Putative phosphoesterase SAR0985 from Staphylococcus aureus (strain MRSA252).